Consider the following 314-residue polypeptide: Homoserine kinase (314 aa).

96-106 (PIGSGLGSSAC) serves as a coordination point for ATP.

It belongs to the GHMP kinase family. Homoserine kinase subfamily.

It localises to the cytoplasm. It catalyses the reaction L-homoserine + ATP = O-phospho-L-homoserine + ADP + H(+). It functions in the pathway amino-acid biosynthesis; L-threonine biosynthesis; L-threonine from L-aspartate: step 4/5. Functionally, catalyzes the ATP-dependent phosphorylation of L-homoserine to L-homoserine phosphate. In Mannheimia succiniciproducens (strain KCTC 0769BP / MBEL55E), this protein is Homoserine kinase.